Reading from the N-terminus, the 279-residue chain is NADH dehydrogenase [ubiquinone] iron-sulfur protein 3, mitochondrial (279 aa).

The N-terminal 27 residues, 1–27 (MISRTLLKRSLPTVQFLRPFTRSSIRR), are a transit peptide targeting the mitochondrion. The tract at residues 249–279 (EPVGEGKDFTPESFKLPTPEPEPEKESDEKK) is disordered. Residues 270-279 (EPEKESDEKK) show a composition bias toward basic and acidic residues.

This sequence belongs to the complex I 30 kDa subunit family. Core subunit of respiratory chain NADH dehydrogenase (Complex I).

It localises to the mitochondrion inner membrane. It catalyses the reaction a ubiquinone + NADH + 5 H(+)(in) = a ubiquinol + NAD(+) + 4 H(+)(out). Functionally, core subunit of the mitochondrial membrane respiratory chain NADH dehydrogenase (Complex I) which catalyzes electron transfer from NADH through the respiratory chain, using ubiquinone as an electron acceptor. Plays a role in cell wall integrity and is involved in osmotic and oxidative resistance, yeast to hypha transition and the ability to damage and invade oral epithelial cells. This chain is NADH dehydrogenase [ubiquinone] iron-sulfur protein 3, mitochondrial (ALI1), found in Candida albicans (strain SC5314 / ATCC MYA-2876) (Yeast).